The chain runs to 66 residues: Large ribosomal subunit protein uL29 (66 aa).

The protein belongs to the universal ribosomal protein uL29 family.

The chain is Large ribosomal subunit protein uL29 from Bacillus licheniformis (strain ATCC 14580 / DSM 13 / JCM 2505 / CCUG 7422 / NBRC 12200 / NCIMB 9375 / NCTC 10341 / NRRL NRS-1264 / Gibson 46).